We begin with the raw amino-acid sequence, 58 residues long: Mitochondrial import receptor subunit TOM7 homolog (58 aa).

The Cytoplasmic portion of the chain corresponds to 1–16 (MKLSPATKSFIGKTVD). A helical transmembrane segment spans residues 17-35 (ISTFAIQWGFVPFVVYLGF). At 36–58 (KKGAEPMPNGQILPLSAMSLLWG) the chain is on the mitochondrial intermembrane side.

The protein belongs to the Tom7 family. Forms part of the preprotein translocase complex of the outer mitochondrial membrane (TOM complex).

The protein resides in the mitochondrion outer membrane. This Caenorhabditis elegans protein is Mitochondrial import receptor subunit TOM7 homolog (tomm-7).